Reading from the N-terminus, the 336-residue chain is Glycerol-3-phosphate dehydrogenase [NAD(P)+] (336 aa).

Residues S11, W12, R33, R34, and K107 each contribute to the NADPH site. The sn-glycerol 3-phosphate site is built by K107 and G137. An NADPH-binding site is contributed by A141. The sn-glycerol 3-phosphate site is built by K192, D245, S255, R256, and N257. Residue K192 is the Proton acceptor of the active site. R256 lines the NADPH pocket. Residue E282 coordinates NADPH.

This sequence belongs to the NAD-dependent glycerol-3-phosphate dehydrogenase family.

Its subcellular location is the cytoplasm. It carries out the reaction sn-glycerol 3-phosphate + NAD(+) = dihydroxyacetone phosphate + NADH + H(+). The enzyme catalyses sn-glycerol 3-phosphate + NADP(+) = dihydroxyacetone phosphate + NADPH + H(+). The protein operates within membrane lipid metabolism; glycerophospholipid metabolism. Functionally, catalyzes the reduction of the glycolytic intermediate dihydroxyacetone phosphate (DHAP) to sn-glycerol 3-phosphate (G3P), the key precursor for phospholipid synthesis. This Thermobifida fusca (strain YX) protein is Glycerol-3-phosphate dehydrogenase [NAD(P)+].